The primary structure comprises 2809 residues: Fibrillin-3 (2809 aa).

Residues 1–31 form the signal peptide; sequence MTLEGLYLARGPLARLLLAWSALLCMAGGQG. The propeptide occupies 32–48; that stretch reads RWDGALEAAGPGRVRRR. The 33-residue stretch at 147–179 folds into the EGF-like 1 domain; it reads GQPICDRGCHNGGRCIGPNRCACVYGFMGPQCE. 3 disulfides stabilise this stretch: Cys151–Cys161, Cys155–Cys167, and Cys169–Cys178. The region spanning 185–237 is the TB 1 domain; that stretch reads GPCFGQVGPEGCQHQLTGLVCTKALCCATVGRAWGLPCELCPAQPHPCRRGFI. In terms of domain architecture, EGF-like 2; calcium-binding spans 247–288; that stretch reads DVDECQAVPGLCQGGSCVNMVGSFHCRCPVGHRLSDSSAACE. Cystine bridges form between Cys251–Cys263, Cys258–Cys272, and Cys274–Cys287. The region spanning 293 to 346 is the TB 2 domain; the sequence is GACFSVLFGGRCAGDLAGHYTRRQCCCDRGRCWAAGPVPELCPPRGSNEFQQLC. A glycan (N-linked (GlcNAc...) asparagine) is linked at Asn406. The 41-residue stretch at 408–448 folds into the EGF-like 3 domain; that stretch reads TIDICRHFTNLCLNGRCLPTPSSYRCECNVGYTQDVRGECI. 15 disulfides stabilise this stretch: Cys412–Cys424, Cys419–Cys433, Cys435–Cys447, Cys453–Cys463, Cys458–Cys472, Cys474–Cys487, Cys493–Cys505, Cys500–Cys514, Cys516–Cys529, Cys535–Cys546, Cys541–Cys555, Cys557–Cys570, Cys576–Cys587, Cys582–Cys596, and Cys598–Cys611. The region spanning 449 to 488 is the EGF-like 4; calcium-binding domain; that stretch reads DVDECTSSPCHHGDCVNIPGTYHCRCYPGFQATPTRQACV. Residues 489–530 form the EGF-like 5; calcium-binding domain; that stretch reads DVDECIVSGGLCHLGRCVNTEGSFQCVCNAGFELSPDGKNCV. Residues 531 to 571 enclose the EGF-like 6; calcium-binding domain; the sequence is DHNECATSTMCVNGVCLNEDGSFSCLCKPGFLLAPGGHYCM. Residues 572–612 enclose the EGF-like 7; calcium-binding domain; the sequence is DIDECQTPGICVNGHCTNTEGSFRCQCLGGLAVGTDGRVCV. The TB 3 domain occupies 618 to 670; that stretch reads STCYGAIEKGSCARPFPGTVTKSECCCANPDHGFGEPCQLCPAKDSAEFQALC. The EGF-like 8; calcium-binding domain maps to 682–723; it reads DINECALDPEVCANGVCENLRGSYRCVCNLGYEAGASGKDCT. Intrachain disulfides connect Cys686–Cys698, Cys693–Cys707, Cys709–Cys722, Cys728–Cys740, Cys735–Cys749, Cys751–Cys764, Cys770–Cys780, Cys775–Cys789, and Cys791–Cys804. The EGF-like 9; calcium-binding domain maps to 724–765; it reads DVDECALNSLLCDNGWCQNSPGSYSCSCPPGFHFWQDTEICK. The region spanning 766-805 is the EGF-like 10; calcium-binding domain; sequence DVDECLSSPCVSGVCRNLAGSYTCKCGPGSRLDPSGTFCL. The 52-residue stretch at 810-861 folds into the TB 4 domain; it reads GTCWLKIQESRCEVNLQGASLRSECCATLGAAWGSPCERCEIDPACARGFAR. The EGF-like 11; calcium-binding domain occupies 869 to 910; sequence DVNECESFPGVCPNGRCVNTAGSFRCECPEGLMLDASGRLCV. 3 cysteine pairs are disulfide-bonded: Cys873–Cys885, Cys880–Cys894, and Cys896–Cys909. The TB 5 domain occupies 915 to 966; it reads EPCFLRWDEDECGVTLPGKYRMDVCCCSIGAVWGVECEACPDPESLEFASLC. Residues 986–1027 enclose the EGF-like 12; calcium-binding domain; that stretch reads DVNECKVFPGLCTHGTCRNTVGSFHCACAGGFALDAQERNCT. 36 disulfide bridges follow: Cys990–Cys1002, Cys997–Cys1011, Cys1013–Cys1026, Cys1032–Cys1044, Cys1039–Cys1053, Cys1055–Cys1069, Cys1075–Cys1087, Cys1082–Cys1096, Cys1098–Cys1111, Cys1117–Cys1129, Cys1124–Cys1138, Cys1140–Cys1153, Cys1159–Cys1170, Cys1166–Cys1179, Cys1181–Cys1194, Cys1200–Cys1212, Cys1207–Cys1221, Cys1223–Cys1236, Cys1242–Cys1254, Cys1249–Cys1263, Cys1265–Cys1278, Cys1284–Cys1297, Cys1291–Cys1306, Cys1308–Cys1319, Cys1325–Cys1338, Cys1332–Cys1347, Cys1349–Cys1360, Cys1366–Cys1378, Cys1373–Cys1387, Cys1389–Cys1402, Cys1408–Cys1419, Cys1414–Cys1428, Cys1430–Cys1443, Cys1449–Cys1460, Cys1455–Cys1469, and Cys1471–Cys1484. Residue Asn1025 is glycosylated (N-linked (GlcNAc...) asparagine). One can recognise an EGF-like 13; calcium-binding domain in the interval 1028-1070; sequence DIDECRISPDLCGQGTCVNTPGSFECECFPGYESGFMLMKNCM. Residues 1071–1112 form the EGF-like 14; calcium-binding domain; the sequence is DVDECARDPLLCRGGTCTNTDGSYKCQCPPGHELTAKGTACE. One can recognise an EGF-like 15; calcium-binding domain in the interval 1113-1154; the sequence is DIDECSLSDGLCPHGQCVNVIGAFQCSCHAGFQSTPDRQGCV. In terms of domain architecture, EGF-like 16; calcium-binding spans 1155–1195; the sequence is DINECRVQNGGCDVHCINTEGSYRCSCGQGYSLMPDGRACA. The EGF-like 17 domain occupies 1196–1237; that stretch reads DVDECEENPRVCDQGHCTNMPGGHRCLCYDGFMATPDMRTCV. The EGF-like 18; calcium-binding domain maps to 1238 to 1279; that stretch reads DVDECDLNPHICLHGDCENTKGSFVCHCQLGYMVRKGATGCS. The region spanning 1280–1320 is the EGF-like 19; calcium-binding domain; it reads DVDECEVGGHNCDSHASCLNIPGSFSCRCLPGWVGDGFECH. The region spanning 1321-1361 is the EGF-like 20; calcium-binding domain; that stretch reads DLDECVSQEHRCSPRGDCLNVPGSYRCTCRQGFAGDGFFCE. Residues 1362–1403 enclose the EGF-like 21; calcium-binding domain; it reads DRDECAENVDLCDNGQCLNAPGGYRCECEMGFDPTEDHRACQ. The 41-residue stretch at 1404–1444 folds into the EGF-like 22; calcium-binding domain; that stretch reads DVDECAQGNLCAFGSCENLPGMFRCICNGGYELDRGGGNCT. Asn1442 is a glycosylation site (N-linked (GlcNAc...) asparagine). Residues 1445-1485 enclose the EGF-like 23; calcium-binding domain; sequence DINECADPVNCINGVCINTPGSYLCSCPQDFELNPSGVGCV. In terms of domain architecture, TB 6 spans 1490–1546; the sequence is GNCFLETHDRGDSGISCSAEIGVGVTRASCCCSLGRAWGNPCELCPMANTTEYRTLC. Residue Asn1538 is glycosylated (N-linked (GlcNAc...) asparagine). Positions 1563 to 1604 constitute an EGF-like 24; calcium-binding domain; sequence DIDECQELPGLCQGGDCVNTFGSFQCECPPGYHLSEHTRICE. Disulfide bonds link Cys1567–Cys1579, Cys1574–Cys1588, Cys1590–Cys1603, Cys1609–Cys1621, Cys1616–Cys1630, and Cys1632–Cys1645. The EGF-like 25; calcium-binding domain maps to 1605–1646; that stretch reads DIDECSTHSGICGPGTCYNTLGNYTCVCPAEYLQVNGGNNCM. The N-linked (GlcNAc...) asparagine glycan is linked to Asn1627. Residues 1651–1703 form the TB 7 domain; that stretch reads SVCFRHYNGTCQNELAFNVTRKMCCCSYNIGQAWNRPCEACPTPISPDYQILC. Residues Asn1658 and Asn1668 are each glycosylated (N-linked (GlcNAc...) asparagine). The EGF-like 26; calcium-binding domain maps to 1721–1762; sequence DIDECGEIPAICANGICINQIGSFRCECPAGFNYNSILLACE. Intrachain disulfides connect Cys1725-Cys1737, Cys1732-Cys1746, Cys1748-Cys1761, Cys1767-Cys1780, Cys1774-Cys1789, Cys1791-Cys1803, Cys1809-Cys1821, Cys1816-Cys1830, Cys1832-Cys1845, Cys1851-Cys1861, Cys1856-Cys1870, Cys1872-Cys1884, Cys1890-Cys1903, Cys1898-Cys1912, Cys1914-Cys1927, Cys1933-Cys1945, Cys1940-Cys1954, Cys1956-Cys1967, Cys1973-Cys1985, Cys1980-Cys1994, and Cys1996-Cys2009. One can recognise an EGF-like 27; calcium-binding domain in the interval 1763–1804; that stretch reads DVDECGSRESPCQQNADCINIPGSYRCKCTRGYKLSPGGACV. The 42-residue stretch at 1805–1846 folds into the EGF-like 28 domain; the sequence is GRNECREIPNVCSHGDCMDTEGSYMCLCHRGFQASADQTLCM. The 39-residue stretch at 1847–1885 folds into the EGF-like 29; calcium-binding domain; that stretch reads DIDECDRQPCGNGTCKNIIGSYNCLCFPGFVVTHNGDCV. A glycan (N-linked (GlcNAc...) asparagine) is linked at Asn1858. The EGF-like 30; calcium-binding domain occupies 1886–1928; the sequence is DFDECTTLVGQVCRFGHCLNTAGSFHCLCQDGFELTADGKNCV. One can recognise an EGF-like 31; calcium-binding domain in the interval 1929-1968; the sequence is DTNECLSLAGTCLPGTCQNLEGSFRCICPPGFQVQSDHCI. The 42-residue stretch at 1969–2010 folds into the EGF-like 32; calcium-binding domain; it reads DIDECSEEPNLCLFGTCTNSPGSFQCLCPPGFVLSDNGHRCF. The TB 8 domain maps to 2015–2068; sequence SFCFTRFEAGKCSVPKAFNTTKTRCCCSKRPGEGWGDPCELCPQEGSAAFQELC. The N-linked (GlcNAc...) asparagine glycan is linked to Asn2033. The EGF-like 33; calcium-binding domain occupies 2084 to 2125; sequence DVNECAENPGVCTNGVCVNTDGSFRCECPFGYSLDFTGINCV. Intrachain disulfides connect Cys2088–Cys2100, Cys2095–Cys2109, Cys2111–Cys2124, Cys2130–Cys2141, Cys2136–Cys2150, Cys2152–Cys2164, Cys2170–Cys2181, Cys2177–Cys2190, Cys2192–Cys2205, Cys2211–Cys2225, Cys2218–Cys2234, Cys2236–Cys2250, Cys2256–Cys2268, Cys2263–Cys2277, and Cys2279–Cys2292. Positions 2126-2165 constitute an EGF-like 34; calcium-binding domain; it reads DTDECSVGHPCGQGTCTNVIGGFECACADGFEPGLMMTCE. Positions 2166–2206 constitute an EGF-like 35; calcium-binding domain; that stretch reads DIDECSLNPLLCAFRCHNTEGSYLCTCPAGYTLREDGAMCR. In terms of domain architecture, EGF-like 36; calcium-binding spans 2207–2251; sequence DVDECADGQQDCHARGMECKNLIGTFACVCPPGMRPLPGSGEGCT. The EGF-like 37; calcium-binding domain maps to 2252-2293; that stretch reads DDNECHAQPDLCVNGRCVNTAGSFRCDCDEGFQPSPTLTECH. Residues 2298–2351 enclose the TB 9 domain; sequence GPCFAEVLQTMCRSLSSSSEAVTRAECCCGGGRGWGPRCELCPLPGTSAYRKLC. The region spanning 2363-2404 is the EGF-like 38; calcium-binding domain; the sequence is DVDECRMLAHLCAHGECINSLGSFRCHCQAGYTPDATATTCL. 21 disulfides stabilise this stretch: Cys2367–Cys2379, Cys2374–Cys2388, Cys2390–Cys2403, Cys2409–Cys2420, Cys2416–Cys2429, Cys2431–Cys2444, Cys2450–Cys2461, Cys2457–Cys2470, Cys2472–Cys2483, Cys2489–Cys2502, Cys2496–Cys2511, Cys2513–Cys2526, Cys2532–Cys2542, Cys2538–Cys2551, Cys2553–Cys2566, Cys2572–Cys2584, Cys2579–Cys2593, Cys2595–Cys2608, Cys2614–Cys2625, Cys2621–Cys2634, and Cys2636–Cys2648. The EGF-like 39; calcium-binding domain occupies 2405–2445; sequence DMDECSQVPKPCTFLCKNTKGSFLCSCPRGYLLEEDGRTCK. Residues 2446-2484 enclose the EGF-like 40; calcium-binding domain; it reads DLDECTSRQHNCQFLCVNTVGAFTCRCPPGFTQHHQACF. The region spanning 2485–2527 is the EGF-like 41; calcium-binding domain; it reads DNDECSAQPGPCGAHGHCHNTPGSFRCECHQGFTLVSSGHGCE. Positions 2528 to 2567 constitute an EGF-like 42; calcium-binding domain; the sequence is DVNECDGPHRCQHGCQNQLGGYRCSCPQGFTQHSQWAQCV. One can recognise an EGF-like 43; calcium-binding domain in the interval 2568–2609; sequence DENECALSPPTCGSASCRNTLGGFRCVCPSGFDFDQALGGCQ. Residues 2610 to 2649 enclose the EGF-like 44; calcium-binding domain; that stretch reads EVDECAGRRGPCSYSCANTPGGFLCGCPQGYFRAGQGHCV. Asn2713 is a glycosylation site (N-linked (GlcNAc...) asparagine).

This sequence belongs to the fibrillin family. Post-translationally, probably forms intermolecular disulfide bonds either with other FBN3 molecules or with other components of the microfibrils. In terms of tissue distribution, predominantly expressed in connective tissues such as skeletal muscle, tendon, skin, perichondrium and periosteum. Highly expressed in fetal lung, brain, kidney. Expressed at low level in prostate, testis, mammary gland, uterus, ovary, placenta, bladder, adrenal gland, thyroid, fetal thymus, fetal liver, liver, fetal heart and heart.

The protein resides in the secreted. Its subcellular location is the extracellular space. It localises to the extracellular matrix. Fibrillins are structural components of 10-12 nm extracellular calcium-binding microfibrils, which occur either in association with elastin or in elastin-free bundles. Fibrillin-containing microfibrils provide long-term force bearing structural support. This is Fibrillin-3 (FBN3) from Homo sapiens (Human).